The following is a 491-amino-acid chain: Arginine decarboxylase (491 aa).

Lysine 227 is subject to N6-(pyridoxal phosphate)lysine.

Belongs to the Orn/Lys/Arg decarboxylase class-I family. The cofactor is pyridoxal 5'-phosphate.

It is found in the cytoplasm. It carries out the reaction L-arginine + H(+) = agmatine + CO2. The protein operates within amine and polyamine biosynthesis; agmatine biosynthesis; agmatine from L-arginine: step 1/1. Functionally, catalyzes the formation of agmatine from arginine. The sequence is that of Arginine decarboxylase (speA) from Halalkalibacterium halodurans (strain ATCC BAA-125 / DSM 18197 / FERM 7344 / JCM 9153 / C-125) (Bacillus halodurans).